We begin with the raw amino-acid sequence, 434 residues long: 3-phosphoshikimate 1-carboxyvinyltransferase (434 aa).

Residues Lys-15, Ser-16, and Arg-20 each contribute to the 3-phosphoshikimate site. Lys-15 is a phosphoenolpyruvate binding site. Gly-96 and Arg-124 together coordinate phosphoenolpyruvate. 5 residues coordinate 3-phosphoshikimate: Ser-169, Gln-171, Ser-195, Asp-319, and Lys-346. Position 171 (Gln-171) interacts with phosphoenolpyruvate. Asp-319 serves as the catalytic Proton acceptor. Residues Arg-350 and Arg-394 each coordinate phosphoenolpyruvate.

It belongs to the EPSP synthase family. In terms of assembly, monomer.

The protein resides in the cytoplasm. The enzyme catalyses 3-phosphoshikimate + phosphoenolpyruvate = 5-O-(1-carboxyvinyl)-3-phosphoshikimate + phosphate. It participates in metabolic intermediate biosynthesis; chorismate biosynthesis; chorismate from D-erythrose 4-phosphate and phosphoenolpyruvate: step 6/7. Catalyzes the transfer of the enolpyruvyl moiety of phosphoenolpyruvate (PEP) to the 5-hydroxyl of shikimate-3-phosphate (S3P) to produce enolpyruvyl shikimate-3-phosphate and inorganic phosphate. This chain is 3-phosphoshikimate 1-carboxyvinyltransferase, found in Chlorobium phaeobacteroides (strain DSM 266 / SMG 266 / 2430).